A 236-amino-acid chain; its full sequence is Exosome complex component Rrp4 (236 aa).

One can recognise an S1 motif domain in the interval 64 to 133; that stretch reads GDKVIGKVIE…EIKESWLTLK (70 aa). The region spanning 141-199 is the KH domain; sequence EGGHMVLIHASRVPRVIGKGGGMVNMVKELTATRIIIGQNGLIWIDGPIEGVTMAIAAI.

It belongs to the RRP4 family. As to quaternary structure, component of the archaeal exosome complex. Forms a trimer of Rrp4 and/or Csl4 subunits. The trimer associates with a hexameric ring-like arrangement composed of 3 Rrp41-Rrp42 heterodimers.

It localises to the cytoplasm. Non-catalytic component of the exosome, which is a complex involved in RNA degradation. Increases the RNA binding and the efficiency of RNA degradation. Confers strong poly(A) specificity to the exosome. In Thermoplasma acidophilum (strain ATCC 25905 / DSM 1728 / JCM 9062 / NBRC 15155 / AMRC-C165), this protein is Exosome complex component Rrp4.